The primary structure comprises 661 residues: PAN2-PAN3 deadenylation complex subunit PAN3 (661 aa).

Disordered regions lie at residues 1–26 (MASA…AREN) and 53–130 (DPHK…LRQD). A C3H1-type zinc finger spans residues 26-55 (NAKDTLCRNITIYGRCRYEDKGCAFNHDPH). Over residues 75–102 (SFTPSLLSSNGSSPTSTPATTKKMTTIS) the composition is skewed to low complexity. Polar residues predominate over residues 115 to 130 (SVVSRSNASTPGLRQD). Residues 263–524 (QTLPNTQLPA…NIDIFITGIS (262 aa)) are pseudokinase domain. ATP contacts are provided by residues Arg-315, 364–371 (DYHPLSKT), and 424–425 (SK). A coiled-coil region spans residues 525–563 (SQLMSTFDSALHLDDQLTSDLSRELENGRLVRLMTKLNF). The interval 564–661 (VNERPEYEHD…ALMKPARRMH (98 aa)) is knob domain.

It belongs to the protein kinase superfamily. PAN3 family. As to quaternary structure, homodimer. Forms a heterotrimer with a catalytic subunit pan2 to form the poly(A)-nuclease (PAN) deadenylation complex. Interacts (via PAM-2 motif) with poly(A)-binding protein pab1 (via PABC domain), conferring substrate specificity of the enzyme complex.

The protein localises to the cytoplasm. Regulatory subunit of the poly(A)-nuclease (PAN) deadenylation complex, one of two cytoplasmic mRNA deadenylases involved in mRNA turnover. PAN specifically shortens poly(A) tails of RNA and the activity is stimulated by poly(A)-binding protein pab1. PAN deadenylation is followed by rapid degradation of the shortened mRNA tails by the CCR4-NOT complex. Deadenylated mRNAs are then degraded by two alternative mechanisms, namely exosome-mediated 3'-5' exonucleolytic degradation, or deadenylation-dependent mRNA decaping and subsequent 5'-3' exonucleolytic degradation by xrn1. May also be involved in post-transcriptional maturation of mRNA poly(A) tails. pan3 acts as a positive regulator for PAN activity, recruiting the catalytic subunit pan2 to mRNA via its interaction with RNA and with pab1. The sequence is that of PAN2-PAN3 deadenylation complex subunit PAN3 from Neosartorya fischeri (strain ATCC 1020 / DSM 3700 / CBS 544.65 / FGSC A1164 / JCM 1740 / NRRL 181 / WB 181) (Aspergillus fischerianus).